We begin with the raw amino-acid sequence, 346 residues long: Phosphate acyltransferase (346 aa).

The protein belongs to the PlsX family. As to quaternary structure, homodimer. Probably interacts with PlsY.

The protein localises to the cytoplasm. It catalyses the reaction a fatty acyl-[ACP] + phosphate = an acyl phosphate + holo-[ACP]. It functions in the pathway lipid metabolism; phospholipid metabolism. Catalyzes the reversible formation of acyl-phosphate (acyl-PO(4)) from acyl-[acyl-carrier-protein] (acyl-ACP). This enzyme utilizes acyl-ACP as fatty acyl donor, but not acyl-CoA. This is Phosphate acyltransferase from Geotalea uraniireducens (strain Rf4) (Geobacter uraniireducens).